Here is a 173-residue protein sequence, read N- to C-terminus: Protein GrpE (173 aa).

A compositionally biased stretch (basic and acidic residues) spans 1–20 (MQDEFKTDTPRTEAGSEKET). Residues 1–23 (MQDEFKTDTPRTEAGSEKETMPS) are disordered.

The protein belongs to the GrpE family. Homodimer.

The protein resides in the cytoplasm. Participates actively in the response to hyperosmotic and heat shock by preventing the aggregation of stress-denatured proteins, in association with DnaK and GrpE. It is the nucleotide exchange factor for DnaK and may function as a thermosensor. Unfolded proteins bind initially to DnaJ; upon interaction with the DnaJ-bound protein, DnaK hydrolyzes its bound ATP, resulting in the formation of a stable complex. GrpE releases ADP from DnaK; ATP binding to DnaK triggers the release of the substrate protein, thus completing the reaction cycle. Several rounds of ATP-dependent interactions between DnaJ, DnaK and GrpE are required for fully efficient folding. This Thiobacillus denitrificans (strain ATCC 25259 / T1) protein is Protein GrpE.